Consider the following 220-residue polypeptide: MSSLSKEAELVHEALLARGLETPLRKQELDAETRKTRIQEHMTQVMQLLNLDLSDDSLADTPRRIAKMYVDEIFSGLDYENFPKITLIENKMKVDEMVTVRDITLTSTCEHHFVTIDGKATVAYIPKDSVIGLSKINRIVQFFAQRPQVQERLTQQILLALQTLLGTNNVAVSIDAVHYCVKARGIRDATSATTTTSLGGLFKSSQNTRQEFLRAVRHNG.

Zn(2+)-binding residues include C109, H112, and C180.

It belongs to the GTP cyclohydrolase I family. In terms of assembly, toroid-shaped homodecamer, composed of two pentamers of five dimers.

The catalysed reaction is GTP + H2O = 7,8-dihydroneopterin 3'-triphosphate + formate + H(+). It functions in the pathway cofactor biosynthesis; 7,8-dihydroneopterin triphosphate biosynthesis; 7,8-dihydroneopterin triphosphate from GTP: step 1/1. This Yersinia enterocolitica serotype O:8 / biotype 1B (strain NCTC 13174 / 8081) protein is GTP cyclohydrolase 1.